The chain runs to 793 residues: MNLFICHVFLLLLHGYLIICQDIPPDTIISAVNTAQQEVTQREASSFSQQQARASVAAFAGAPQPAAVLAASRPARTGLDRFNRRNDPQRNTELSIGGQVTQRATLALRSSDPASAAAPAARTLTPLDARAPAAGFSASSTMTFRNAAAQSCTDSRPVTVCDPQQRYRETDGQCNNLVFPSFPSGAFKLGAAFTAQGRFLFPAYDDGVSSPRIRSVIPGFLLPNARLVSRNVHSGTAFDSDRHTPFLTHFGQFIDHDIVSTPETEPKFTMPNSHCCLEPNLEECFNINFEPDPLLQGSCIRFNRADTAPSYFCNPGPRLQQNQRSSFVDGTMVYGWDVEQENRLREPGTGRLISEGDDQLKLEPVADPLNPPCFPVDNRCFEAGDHRSLETVPLTVMHIMFLRRHNLIVQELQNLPLPWTPELLFQEAKRIVVAELQHITYNEFLPRVLGPQFMTIFRLWPAPLFSDTYSPLVDPRTTSGFSVAAYRFGHSLVRNVHDQIGPGGLPVNNLLLQDHFDRLQTHLNVFPGGNTEGFARWMKLSQKSRADRTLVDGLQNNLFPCEDPDCPMGGGVTKSFDLAALNIQRGRDHGLPPYTAWRYWCTGRRAFVFTPNAVGLSDHSPFEANILSNTYRHVDDIDLFTGGMTEMRRPGALLGPTLSCIIGLQFSNYKRGDRFFYERPDPVMAFTPGQLQAIKETSLAKILCSTMRSFSNVQIBAMDRVSPSNPIVNCDELRSQDIIAKIPFLWNQLPNRAIQSAAARASNISGRTGLRVSTRFEDPAMLRLIGRRRLYKH.

The N-terminal stretch at 1 to 20 is a signal peptide; sequence MNLFICHVFLLLLHGYLIIC.

The protein belongs to the peroxidase family. In terms of tissue distribution, prismatic layer of shell (at protein level). Expressed primarily in the mantle with highest level in the mantle edge and lower level in the mantle pallium.

The protein resides in the secreted. The polypeptide is Peroxidase-like protein (Margaritifera margaritifera (Freshwater pearl mussel)).